Here is a 324-residue protein sequence, read N- to C-terminus: HSF-like protein (324 aa).

The signal sequence occupies residues methionine 1–serine 19. Cystatin fetuin-A-type domains follow at residues glutamine 21–serine 130 and arginine 141–valine 254. 6 cysteine pairs are disulfide-bonded: cysteine 28–cysteine 315, cysteine 85–cysteine 96, cysteine 110–cysteine 129, cysteine 143–cysteine 146, cysteine 205–cysteine 217, and cysteine 230–cysteine 253. N-linked (GlcNAc...) asparagine glycosylation is present at asparagine 95. The N-linked (GlcNAc...) asparagine glycan is linked to asparagine 204. Residue asparagine 282 is glycosylated (N-linked (GlcNAc...) asparagine).

The protein belongs to the fetuin family. In terms of assembly, homodimer. In terms of tissue distribution, expressed by the liver.

The protein resides in the secreted. Its function is as follows. May not have antihemorrhagic activity. This Protobothrops flavoviridis (Habu) protein is HSF-like protein.